A 662-amino-acid chain; its full sequence is UvrABC system protein B (662 aa).

Residues 25–411 enclose the Helicase ATP-binding domain; that stretch reads DGIIAGDKFQ…STRIVEQVIR (387 aa). 38 to 45 contributes to the ATP binding site; sequence GVTGSGKT. Residues 91–114 carry the Beta-hairpin motif; that stretch reads YYDYYQPEAYVPARDLYIEKDASI. In terms of domain architecture, Helicase C-terminal spans 428-594; the sequence is QMEHIYGEVK…TIKKAIEDIL (167 aa). The UVR domain maps to 625 to 660; that stretch reads KKLIKKLEAQMAEYADMLMFEEAAVIRDKIEEVKRI.

The protein belongs to the UvrB family. Forms a heterotetramer with UvrA during the search for lesions. Interacts with UvrC in an incision complex.

The protein localises to the cytoplasm. The UvrABC repair system catalyzes the recognition and processing of DNA lesions. A damage recognition complex composed of 2 UvrA and 2 UvrB subunits scans DNA for abnormalities. Upon binding of the UvrA(2)B(2) complex to a putative damaged site, the DNA wraps around one UvrB monomer. DNA wrap is dependent on ATP binding by UvrB and probably causes local melting of the DNA helix, facilitating insertion of UvrB beta-hairpin between the DNA strands. Then UvrB probes one DNA strand for the presence of a lesion. If a lesion is found the UvrA subunits dissociate and the UvrB-DNA preincision complex is formed. This complex is subsequently bound by UvrC and the second UvrB is released. If no lesion is found, the DNA wraps around the other UvrB subunit that will check the other stand for damage. The protein is UvrABC system protein B of Treponema denticola (strain ATCC 35405 / DSM 14222 / CIP 103919 / JCM 8153 / KCTC 15104).